The chain runs to 664 residues: tRNA (carboxymethyluridine(34)-5-O)-methyltransferase ALKBH8 (664 aa).

Residues 43 to 120 (QSLVVANGGL…QKIILYLNFV (78 aa)) enclose the RRM domain. The 118-residue stretch at 220–337 (KPDQMTINQY…RTSFTFRKVR (118 aa)) folds into the Fe2OG dioxygenase domain. 2-oxoglutarate is bound at residue 227–229 (NQY). Positions 238 and 240 each coordinate Fe cation. Residue H242 participates in Zn(2+) binding. H292 contributes to the Fe cation binding site. 2-oxoglutarate contacts are provided by R328 and R334. Zn(2+) contacts are provided by C341, C343, and C349. Residues 411-664 (ADIGCGNGKY…GNWCVILQKA (254 aa)) are methyltransferase domain. Residues 516 to 575 (KYLKGNRNSQGKKEEMNSDTSVQRSLVEQMPDMGSRDSASSVPRINDSQEGGCNSRQVSN) are disordered. The span at 552-575 (DSASSVPRINDSQEGGCNSRQVSN) shows a compositional bias: polar residues.

Belongs to the alkB family. Interacts with TRMT112. Requires Fe(2+) as cofactor.

The protein resides in the cytoplasm. It localises to the nucleus. It carries out the reaction 5-(carboxymethyl)uridine(34) in tRNA + S-adenosyl-L-methionine = 5-(2-methoxy-2-oxoethyl)uridine(34) in tRNA + S-adenosyl-L-homocysteine. Its function is as follows. Catalyzes the methylation of 5-carboxymethyl uridine to 5-methylcarboxymethyl uridine at the wobble position of the anticodon loop in tRNA via its methyltransferase domain. Catalyzes the last step in the formation of 5-methylcarboxymethyl uridine at the wobble position of the anticodon loop in target tRNA. Has a preference for tRNA(Arg) and tRNA(Glu), and does not bind tRNA(Lys). Binds tRNA and catalyzes the iron and alpha-ketoglutarate dependent hydroxylation of 5-methylcarboxymethyl uridine at the wobble position of the anticodon loop in tRNA via its dioxygenase domain, giving rise to 5-(S)-methoxycarbonylhydroxymethyluridine; has a preference for tRNA(Gly). Required for normal survival after DNA damage. May inhibit apoptosis and promote cell survival and angiogenesis. This Macaca fascicularis (Crab-eating macaque) protein is tRNA (carboxymethyluridine(34)-5-O)-methyltransferase ALKBH8 (ALKBH8).